A 280-amino-acid polypeptide reads, in one-letter code: Shikimate dehydrogenase (NADP(+)) (280 aa).

Residues 20–22 (SLS) and threonine 67 each bind shikimate. Lysine 71 serves as the catalytic Proton acceptor. Shikimate is bound by residues asparagine 92 and aspartate 107. NADP(+) is bound by residues 131-135 (GAGGA) and glycine 220. Shikimate is bound at residue tyrosine 222. An NADP(+)-binding site is contributed by glycine 243.

The protein belongs to the shikimate dehydrogenase family. In terms of assembly, homodimer.

The enzyme catalyses shikimate + NADP(+) = 3-dehydroshikimate + NADPH + H(+). Its pathway is metabolic intermediate biosynthesis; chorismate biosynthesis; chorismate from D-erythrose 4-phosphate and phosphoenolpyruvate: step 4/7. In terms of biological role, involved in the biosynthesis of the chorismate, which leads to the biosynthesis of aromatic amino acids. Catalyzes the reversible NADPH linked reduction of 3-dehydroshikimate (DHSA) to yield shikimate (SA). This is Shikimate dehydrogenase (NADP(+)) from Maricaulis maris (strain MCS10) (Caulobacter maris).